The sequence spans 361 residues: Alanine racemase 2 (361 aa).

The Proton acceptor; specific for D-alanine role is filled by Lys30. Lys30 carries the post-translational modification N6-(pyridoxal phosphate)lysine. Position 122 (Arg122) interacts with substrate. Residue Tyr256 is the Proton acceptor; specific for L-alanine of the active site. Position 303 (Met303) interacts with substrate.

This sequence belongs to the alanine racemase family. Pyridoxal 5'-phosphate serves as cofactor.

The enzyme catalyses L-alanine = D-alanine. It participates in amino-acid biosynthesis; D-alanine biosynthesis; D-alanine from L-alanine: step 1/1. Functionally, catalyzes the interconversion of L-alanine and D-alanine. May also act on other amino acids. This Staphylococcus aureus (strain Mu50 / ATCC 700699) protein is Alanine racemase 2 (alr2).